The chain runs to 811 residues: Protein MEI2-like 5 (811 aa).

RRM domains lie at 193-266 (RTLF…YSIP) and 278-351 (GTLV…PSRP). Residues 371-397 (TKHNSFQIGSPSANSPPSLWSQLGSPT) are disordered. A compositionally biased stretch (polar residues) spans 374–397 (NSFQIGSPSANSPPSLWSQLGSPT).

Its function is as follows. Probable RNA-binding protein that may play a role in growth regulation. This Oryza sativa subsp. japonica (Rice) protein is Protein MEI2-like 5 (ML5).